The chain runs to 173 residues: Mesencephalic astrocyte-derived neurotrophic factor homolog (173 aa).

The N-terminal stretch at 1 to 22 (MKTWHMVVVIGFLATLAQTSLA) is a signal peptide. 4 disulfide bridges follow: Cys28/Cys114, Cys31/Cys103, Cys61/Cys72, and Cys148/Cys151.

This sequence belongs to the ARMET family.

It is found in the secreted. Its function is as follows. Required during the maturation of the embryonic nervous system for maintenance of neuronal and cuticular connectivity. Essential for maintenance of dopaminergic neurons and dopamine levels. This chain is Mesencephalic astrocyte-derived neurotrophic factor homolog, found in Drosophila simulans (Fruit fly).